The sequence spans 368 residues: DNA replication and repair protein RecF (368 aa).

Residue 30-37 (GNNAQGKT) participates in ATP binding.

The protein belongs to the RecF family.

The protein localises to the cytoplasm. Functionally, the RecF protein is involved in DNA metabolism; it is required for DNA replication and normal SOS inducibility. RecF binds preferentially to single-stranded, linear DNA. It also seems to bind ATP. This chain is DNA replication and repair protein RecF, found in Streptococcus pyogenes serotype M6 (strain ATCC BAA-946 / MGAS10394).